A 944-amino-acid chain; its full sequence is Neutral alpha-glucosidase AB (944 aa).

An N-terminal signal peptide occupies residues 1 to 32 (MAAIAAVAARRRRSWLSLVLAYLGVCLGITLA). Cys41 and Cys47 are disulfide-bonded. The residue at position 52 (Ser52) is a Phosphoserine. Residue Asn97 is glycosylated (N-linked (GlcNAc...) asparagine). Positions 180–238 (HQRAPRVPQESKDPAEGNGAQPEATPGDGDKPEETQEKAEKDEPGAWEETFKTHSDSKP) are disordered. Positions 207-236 (DGDKPEETQEKAEKDEPGAWEETFKTHSDS) are enriched in basic and acidic residues. 2 residues coordinate substrate: Asp283 and Asp429. Asp542 (nucleophile) is an active-site residue. Arg602 is a binding site for substrate. Asp618 serves as the catalytic Proton donor. Cysteines 633 and 644 form a disulfide. His676 serves as a coordination point for substrate.

It belongs to the glycosyl hydrolase 31 family. As to quaternary structure, heterodimer of a catalytic alpha subunit (GANAB) and a beta subunit (PRKCSH). Binds glycosylated PTPRC.

It is found in the endoplasmic reticulum. The protein resides in the golgi apparatus. The protein localises to the melanosome. It catalyses the reaction N(4)-(alpha-D-Glc-(1-&gt;3)-alpha-D-Man-(1-&gt;2)-alpha-D-Man-(1-&gt;2)-alpha-D-Man-(1-&gt;3)-[alpha-D-Man-(1-&gt;2)-alpha-D-Man-(1-&gt;3)-[alpha-D-Man-(1-&gt;2)-alpha-D-Man-(1-&gt;6)]-alpha-D-Man-(1-&gt;6)]-beta-D-Man-(1-&gt;4)-beta-D-GlcNAc-(1-&gt;4)-beta-D-GlcNAc)-L-asparaginyl-[protein] + H2O = N(4)-(alpha-D-Man-(1-&gt;2)-alpha-D-Man-(1-&gt;2)-alpha-D-Man-(1-&gt;3)-[alpha-D-Man-(1-&gt;2)-alpha-D-Man-(1-&gt;3)-[alpha-D-Man-(1-&gt;2)-alpha-D-Man-(1-&gt;6)]-alpha-D-Man-(1-&gt;6)]-beta-D-Man-(1-&gt;4)-beta-D-GlcNAc-(1-&gt;4)-beta-D-GlcNAc)-L-asparaginyl-[protein] (N-glucan mannose isomer 9A1,2,3B1,2,3) + beta-D-glucose. It carries out the reaction N(4)-(alpha-D-Glc-(1-&gt;3)-alpha-D-Glc-(1-&gt;3)-alpha-D-Man-(1-&gt;2)-alpha-D-Man-(1-&gt;2)-alpha-D-Man-(1-&gt;3)-[alpha-D-Man-(1-&gt;2)-alpha-D-Man-(1-&gt;3)-[alpha-D-Man-(1-&gt;2)-alpha-D-Man-(1-&gt;6)]-alpha-D-Man-(1-&gt;6)]-beta-D-Man-(1-&gt;4)-beta-D-GlcNAc-(1-&gt;4)-beta-D-GlcNAc)-L-asparaginyl-[protein] + H2O = N(4)-(alpha-D-Glc-(1-&gt;3)-alpha-D-Man-(1-&gt;2)-alpha-D-Man-(1-&gt;2)-alpha-D-Man-(1-&gt;3)-[alpha-D-Man-(1-&gt;2)-alpha-D-Man-(1-&gt;3)-[alpha-D-Man-(1-&gt;2)-alpha-D-Man-(1-&gt;6)]-alpha-D-Man-(1-&gt;6)]-beta-D-Man-(1-&gt;4)-beta-D-GlcNAc-(1-&gt;4)-beta-D-GlcNAc)-L-asparaginyl-[protein] + beta-D-glucose. Its pathway is glycan metabolism; N-glycan metabolism. In terms of biological role, catalytic subunit of glucosidase II that cleaves sequentially the 2 innermost alpha-1,3-linked glucose residues from the Glc(2)Man(9)GlcNAc(2) oligosaccharide precursor of immature glycoproteins. Required for PKD1/Polycystin-1 and PKD2/Polycystin-2 maturation and localization to the cell surface and cilia. In Mus musculus (Mouse), this protein is Neutral alpha-glucosidase AB.